A 349-amino-acid polypeptide reads, in one-letter code: Magnesium-protoporphyrin IX monomethyl ester [oxidative] cyclase (349 aa).

Positions 1 to 22 (MTATASASSVSGSLGRNELPPH) are disordered.

Belongs to the AcsF family. It depends on Fe cation as a cofactor.

It catalyses the reaction Mg-protoporphyrin IX 13-monomethyl ester + 3 NADPH + 3 O2 + 2 H(+) = 3,8-divinyl protochlorophyllide a + 3 NADP(+) + 5 H2O. It participates in porphyrin-containing compound metabolism; chlorophyll biosynthesis (light-independent). Its function is as follows. Catalyzes the formation of the isocyclic ring in chlorophyll biosynthesis. Mediates the cyclase reaction, which results in the formation of divinylprotochlorophyllide (Pchlide) characteristic of all chlorophylls from magnesium-protoporphyrin IX 13-monomethyl ester (MgPMME). The polypeptide is Magnesium-protoporphyrin IX monomethyl ester [oxidative] cyclase (Prochlorococcus marinus (strain MIT 9211)).